A 474-amino-acid polypeptide reads, in one-letter code: Glutamate--tRNA ligase (474 aa).

The short motif at 9–19 (PSPTGYLHVGG) is the 'HIGH' region element. The 'KMSKS' region signature appears at 240–244 (KLSKR). Lysine 243 contacts ATP.

This sequence belongs to the class-I aminoacyl-tRNA synthetase family. Glutamate--tRNA ligase type 1 subfamily. In terms of assembly, monomer.

The protein resides in the cytoplasm. The enzyme catalyses tRNA(Glu) + L-glutamate + ATP = L-glutamyl-tRNA(Glu) + AMP + diphosphate. In terms of biological role, catalyzes the attachment of glutamate to tRNA(Glu) in a two-step reaction: glutamate is first activated by ATP to form Glu-AMP and then transferred to the acceptor end of tRNA(Glu). This Vibrio parahaemolyticus serotype O3:K6 (strain RIMD 2210633) protein is Glutamate--tRNA ligase.